The primary structure comprises 97 residues: Large ribosomal subunit protein bL28 (97 aa).

Belongs to the bacterial ribosomal protein bL28 family.

The protein is Large ribosomal subunit protein bL28 of Brucella abortus (strain S19).